Reading from the N-terminus, the 255-residue chain is Aliphatic sulfonates import ATP-binding protein SsuB (255 aa).

The 222-residue stretch at 12–233 (LLLNAVSKHY…RLGSVRLAEL (222 aa)) folds into the ABC transporter domain. 44–51 (GRSGGGKS) lines the ATP pocket.

The protein belongs to the ABC transporter superfamily. Aliphatic sulfonates importer (TC 3.A.1.17.2) family. The complex is composed of two ATP-binding proteins (SsuB), two transmembrane proteins (SsuC) and a solute-binding protein (SsuA).

It is found in the cell inner membrane. The catalysed reaction is ATP + H2O + aliphatic sulfonate-[sulfonate-binding protein]Side 1 = ADP + phosphate + aliphatic sulfonateSide 2 + [sulfonate-binding protein]Side 1.. In terms of biological role, part of the ABC transporter complex SsuABC involved in aliphatic sulfonates import. Responsible for energy coupling to the transport system. In Shigella sonnei (strain Ss046), this protein is Aliphatic sulfonates import ATP-binding protein SsuB.